The following is a 191-amino-acid chain: UPF0398 protein LCABL_17010 (191 aa).

This sequence belongs to the UPF0398 family.

This Lacticaseibacillus casei (strain BL23) (Lactobacillus casei) protein is UPF0398 protein LCABL_17010.